The chain runs to 555 residues: Protein FAM234A (555 aa).

Basic and acidic residues predominate over residues 1–22 (MMDNKDLEAEIHPLKNEDKKSQ). Residues 1-40 (MMDNKDLEAEIHPLKNEDKKSQENPGNLPRNEDNLKSKPV) form a disordered region. The Cytoplasmic portion of the chain corresponds to 1–49 (MMDNKDLEAEIHPLKNEDKKSQENPGNLPRNEDNLKSKPVPSRLSRCRT). Ser21 carries the post-translational modification Phosphoserine. Residues 50-70 (VAFFLSLFTCLFVVFVLSFII) traverse the membrane as a helical; Signal-anchor for type II membrane protein segment. At 71-555 (PCPDRPSSQG…FSRLRYRSEM (485 aa)) the chain is on the extracellular side. N-linked (GlcNAc...) asparagine glycans are attached at residues Asn116, Asn120, Asn317, Asn392, and Asn476.

Belongs to the FAM234 family.

It is found in the membrane. This is Protein FAM234A from Mus musculus (Mouse).